We begin with the raw amino-acid sequence, 446 residues long: Eukaryotic translation initiation factor 2 subunit gamma (446 aa).

The 207-residue stretch at 21 to 227 folds into the tr-type G domain; that stretch reads QATINIGTIG…YIVKKIPIPV (207 aa). Residues 30 to 37 are G1; the sequence is GHVAHGKS. Residue 33 to 38 participates in GTP binding; it reads AHGKST. Residues 58 to 62 form a G2 region; that stretch reads NITIK. Residues 114-117 are G3; that stretch reads DCPG. Residues 170-173 and 205-207 contribute to the GTP site; these read NKVD and SAQ. Residues 170–173 form a G4 region; the sequence is NKVD. Residues 205–207 form a G5 region; the sequence is SAQ. An interacts with cdc123 region spans residues 436-446; the sequence is AKVVEGKTLKV.

The protein belongs to the TRAFAC class translation factor GTPase superfamily. Classic translation factor GTPase family. EIF2G subfamily. Eukaryotic translation initiation factor 2 eIF2 is a heterotrimeric complex composed of an alpha, a beta and a gamma subunit. The factors eIF-1, eIF-2, eIF-3, TIF5/eIF-5 and methionyl-tRNAi form a multifactor complex (MFC) that may bind to the 40S ribosome. Interacts with cdc123; the interaction is direct.

It localises to the cytoplasm. It is found in the cytosol. The enzyme catalyses GTP + H2O = GDP + phosphate + H(+). In terms of biological role, as a subunit of eukaryotic initiation factor 2 eIF2, involved in the early steps of protein synthesis. In the presence of GTP, eIF-2 forms a ternary complex with initiator tRNA Met-tRNAi and then recruits the 40S ribosomal complex and initiation factors eIF-1, eIF-1A and eIF-3 to form the 43S pre-initiation complex (43S PIC), a step that determines the rate of protein translation. The 43S PIC binds to mRNA and scans downstream to the initiation codon, where it forms a 48S initiation complex by codon-anticodon base pairing. This leads to the displacement of eIF-1 to allow GTPase-activating protein (GAP) eIF-5-mediated hydrolysis of eIF2-bound GTP. Hydrolysis of GTP and release of Pi, which makes GTP hydrolysis irreversible, causes the release of the eIF-2-GDP binary complex from the 40S subunit, an event that is essential for the subsequent joining of the 60S ribosomal subunit to form an elongation-competent 80S ribosome. In order for eIF-2 to recycle and catalyze another round of initiation, the GDP bound to eIF-2 must be exchanged with GTP by way of a reaction catalyzed by GDP-GTP exchange factor (GEF) eIF-2B. In Schizosaccharomyces pombe (strain 972 / ATCC 24843) (Fission yeast), this protein is Eukaryotic translation initiation factor 2 subunit gamma (tif213).